Consider the following 354-residue polypeptide: Membrane progestin receptor beta (354 aa).

The Cytoplasmic portion of the chain corresponds to 1-76 (MTTAILERLS…FSLFQKHNEV (76 aa)). A helical transmembrane segment spans residues 77 to 97 (VNVWTHLLAALAVLLRFWAFV). The Extracellular segment spans residues 98–111 (EAGALQWASPHTLP). Residues 112–132 (LLLFILSSITYLTCSLLAHLL) traverse the membrane as a helical segment. Topologically, residues 133 to 173 (QSKSELSHYTFYFVDYVGVSVYQYGSALAHFFYSSDQAWYE) are cytoplasmic. Residues 174 to 194 (LFWIFFLPAAAFCGWLSCAGC) form a helical membrane-spanning segment. The Extracellular segment spans residues 195 to 213 (CYAKYRYRRPYPVMRKICQ). A helical membrane pass occupies residues 214 to 234 (VVPAGLAFVLDISPVAHRVAL). At 235 to 243 (CHLAGCQEQ) the chain is on the cytoplasmic side. Residues 244-264 (AAWYHTLQILFFLVSAYFFSC) traverse the membrane as a helical segment. Topologically, residues 265 to 283 (PVPEKYFPGSCDIVGHGHQ) are extracellular. A helical transmembrane segment spans residues 284–304 (IFHAFLSVCTLSQLEAILLDY). Residues 305–315 (QGRHEIFLQRH) lie on the Cytoplasmic side of the membrane. Residues 316–336 (GPLSVYSACLSFFVLAACSAA) form a helical membrane-spanning segment. Residues 337–354 (TATLLRHKVKDRLIKKDS) lie on the Extracellular side of the membrane.

It belongs to the ADIPOR family. As to expression, expressed in brain and testis.

It localises to the cell membrane. Its function is as follows. Plasma membrane progesterone (P4) receptor coupled to G proteins. Seems to act through a G(i) mediated pathway. May be involved in oocyte maturation. Also binds dehydroepiandrosterone (DHEA), pregnanolone, pregnenolone and allopregnanolone. The sequence is that of Membrane progestin receptor beta from Mus musculus (Mouse).